Consider the following 778-residue polypeptide: Kin of IRRE-like protein 3 (778 aa).

A signal peptide spans 1-21 (MRPFQLDLLFLCFFLFSQELG). At 22–535 (LQKRGCCLVL…GLEAESVPMA (514 aa)) the chain is on the extracellular side. Ig-like C2-type domains are found at residues 48 to 142 (YSFS…ARLT), 147 to 243 (PDDP…TSVT), 249 to 330 (PPLV…RTVD), 335 to 415 (PRMT…VTLT), and 419 to 515 (PPII…IRLK). An intrachain disulfide couples C69 to C127. N-linked (GlcNAc...) asparagine glycosylation occurs at N167. An intrachain disulfide couples C170 to C227. An N-linked (GlcNAc...) asparagine glycan is attached at N253. C271 and C314 are oxidised to a cystine. An N-linked (GlcNAc...) asparagine glycan is attached at N324. Cystine bridges form between C356/C398 and C440/C499. The N-linked (GlcNAc...) asparagine glycan is linked to N498. A helical membrane pass occupies residues 536 to 556 (VIIGVAVGAGVAFLVLMATIV). The Cytoplasmic segment spans residues 557 to 778 (AFCCARSQRN…PLQRRMQTHV (222 aa)). The segment covering 727 to 736 (CDSSVSSSGK) has biased composition (polar residues). Residues 727 to 778 (CDSSVSSSGKQDGYVQFDKASKASASSSHHSQSSSQNSDPSRPLQRRMQTHV) are disordered. Residues 748 to 762 (KASASSSHHSQSSSQ) show a composition bias toward low complexity.

This sequence belongs to the immunoglobulin superfamily. In terms of assembly, homodimer; mediates homophilic interactions to promote cell adhesion. Interacts with NPHS1; forms heterodimers with NPHS1. Interacts with NPHS2/podocin (via the C-terminus). Interacts with CASK. Interacts (via extracellular region) with MAP1B. Interacts (via extracellular region) with MYO16. Interacts (via intracellular region) with ATP1B1. Interacts (via intracellular region) with SHMT2. Interacts (via intracellular region) with UFC1. Undergoes proteolysis by a metalloprotease and gives rise to a soluble form. Expressed mainly in adult brain, bone marrow and stromal cells. Expressed in diverse regions of the brain, including the cortex, hippocampus, striatum, olfactory bulb and cerebellum. In brain, expressed in pontine nucleus neurons (at protein level). In hippocampus, produced in both the dentate granule neurons and the GABAergic neurons, but not the CA3 neurons. Expressed in subpopulations of vomeronasal sensory neurons. Expressed in a subset of neurons in dorsal root ganglia.

The protein localises to the cell membrane. It localises to the cell projection. It is found in the axon. Its subcellular location is the dendrite. The protein resides in the secreted. Synaptic adhesion molecule required for the formation of target-specific synapses. Required for formation of target-specific synapses at hippocampal mossy fiber synapses. Required for formation of mossy fiber filopodia, the synaptic structures connecting dentate granule and GABA neurons. Probably acts as a homophilic adhesion molecule that promotes trans-cellular interactions and stabilize mossy fiber filipodia contact and subsequent synapse formation. Required for the coalescence of vomeronasal sensory neuron axons. May be involved in the hematopoietic supportive capacity of stroma cells; the secreted extracellular domain is directly responsible for supporting hematopoietic stem cells. This Mus musculus (Mouse) protein is Kin of IRRE-like protein 3 (Kirrel3).